The sequence spans 157 residues: Protein Smg homolog (157 aa).

It belongs to the Smg family.

The chain is Protein Smg homolog from Shewanella piezotolerans (strain WP3 / JCM 13877).